Consider the following 451-residue polypeptide: uncharacterized protein (451 aa).

Positions 29–204 (LERYPDIIVF…TSMTFKAVPI (176 aa)) constitute an FAD-binding PCMH-type domain. H66 carries the pros-8alpha-FAD histidine modification.

Belongs to the oxygen-dependent FAD-linked oxidoreductase family. It depends on FAD as a cofactor.

This is an uncharacterized protein from Bacillus subtilis (strain 168).